A 274-amino-acid polypeptide reads, in one-letter code: MQIHSSIADLRSALKNRGRVVFVPTMGNLHAGHISLMTQARAHGDTVVASIFVNRLQFGPNEDFDKYPRTFQADCDKLAAAGVDVLFAPTEADLYPEPQEYTVEPPAIQNILDGEFRPGHFRGVATVVLKLFNCVQPQAAMFGKKDYQQLMVIRNMTRQLALPIDIIGGETVRAEDGLALSSRNGYLSAAERTEAPRLYRLLNEIRAAIRAGETDTVKLENEAIAALTAAGWKNDYVAVRQQSDLSMPKGVNAPLVALAASRLGSTRLIDNIEI.

26 to 33 (MGNLHAGH) lines the ATP pocket. His33 (proton donor) is an active-site residue. Gln57 provides a ligand contact to (R)-pantoate. Beta-alanine is bound at residue Gln57. 143–146 (GKKD) is a binding site for ATP. Gln149 is a binding site for (R)-pantoate. Residues Val172 and 180-183 (LSSR) each bind ATP.

It belongs to the pantothenate synthetase family. As to quaternary structure, homodimer.

The protein localises to the cytoplasm. It catalyses the reaction (R)-pantoate + beta-alanine + ATP = (R)-pantothenate + AMP + diphosphate + H(+). Its pathway is cofactor biosynthesis; (R)-pantothenate biosynthesis; (R)-pantothenate from (R)-pantoate and beta-alanine: step 1/1. Catalyzes the condensation of pantoate with beta-alanine in an ATP-dependent reaction via a pantoyl-adenylate intermediate. This chain is Pantothenate synthetase, found in Dechloromonas aromatica (strain RCB).